A 228-amino-acid polypeptide reads, in one-letter code: uncharacterized protein (228 aa).

The region spanning 99 to 207 (LANKVPFVVC…PKIKVGKPFI (109 aa)) is the tRNA-binding domain.

This is an uncharacterized protein from Mycoplasma genitalium (strain ATCC 33530 / DSM 19775 / NCTC 10195 / G37) (Mycoplasmoides genitalium).